The chain runs to 159 residues: Serine-protein kinase RsbW (159 aa).

The protein belongs to the anti-sigma-factor family.

It carries out the reaction L-seryl-[protein] + ATP = O-phospho-L-seryl-[protein] + ADP + H(+). The catalysed reaction is L-threonyl-[protein] + ATP = O-phospho-L-threonyl-[protein] + ADP + H(+). Functionally, negative regulator of sigma-B activity. Phosphorylates and inactivates its specific antagonist protein, RsbV. Upon phosphorylation of RsbV, RsbW is released and binds to sigma-B, thereby blocking its ability to form an RNA polymerase holoenzyme (E-sigma-B). The protein is Serine-protein kinase RsbW of Staphylococcus aureus (strain Newman).